The sequence spans 158 residues: Large ribosomal subunit protein uL15 (158 aa).

Belongs to the universal ribosomal protein uL15 family. In terms of assembly, part of the 50S ribosomal subunit.

In terms of biological role, binds to the 23S rRNA. The chain is Large ribosomal subunit protein uL15 from Aeropyrum pernix (strain ATCC 700893 / DSM 11879 / JCM 9820 / NBRC 100138 / K1).